Reading from the N-terminus, the 398-residue chain is Putative molybdopterin biosynthesis protein MJ0666 (398 aa).

Belongs to the MoeA family.

It participates in cofactor biosynthesis; molybdopterin biosynthesis. The polypeptide is Putative molybdopterin biosynthesis protein MJ0666 (Methanocaldococcus jannaschii (strain ATCC 43067 / DSM 2661 / JAL-1 / JCM 10045 / NBRC 100440) (Methanococcus jannaschii)).